The chain runs to 254 residues: Coenzyme F420:L-glutamate ligase (254 aa).

GTP contacts are provided by residues 11–14, 40–41, and Lys45; these read IPLI and ST. Residue Asp109 coordinates a divalent metal cation. Asn112 contacts GTP. A divalent metal cation contacts are provided by Asp150, Thr151, and Glu208. Position 206–213 (206–213) interacts with GTP; that stretch reads MGEGAGGI.

This sequence belongs to the CofE family. Homodimer. The cofactor is Mg(2+). Requires Mn(2+) as cofactor. K(+) is required as a cofactor.

The catalysed reaction is oxidized coenzyme F420-0 + GTP + L-glutamate = oxidized coenzyme F420-1 + GDP + phosphate + H(+). It carries out the reaction oxidized coenzyme F420-1 + GTP + L-glutamate = oxidized coenzyme F420-2 + GDP + phosphate + H(+). The protein operates within cofactor biosynthesis; coenzyme F420 biosynthesis. Its function is as follows. Catalyzes the GTP-dependent successive addition of two or more gamma-linked L-glutamates to the L-lactyl phosphodiester of 7,8-didemethyl-8-hydroxy-5-deazariboflavin (F420-0) to form coenzyme F420-0-glutamyl-glutamate (F420-2) or polyglutamated F420 derivatives. This Methanosarcina mazei (strain ATCC BAA-159 / DSM 3647 / Goe1 / Go1 / JCM 11833 / OCM 88) (Methanosarcina frisia) protein is Coenzyme F420:L-glutamate ligase.